Consider the following 333-residue polypeptide: Minor fimbrium tip subunit MfA4 (333 aa).

A signal peptide spans 1–18 (MKKYLLYASLLTSVLLFS). Cys-19 is lipidated: N-palmitoyl cysteine. Residue Cys-19 is the site of S-diacylglycerol cysteine attachment. The propeptide occupies 19–53 (CSKNNPSEPVEDRSIEISIRVDDFTKTGETVRYER).

It belongs to the bacteroidetes fimbrillin superfamily. FimA/Mfa1 family. In terms of assembly, component of the fimbrium tip. Minor fimbriae are composed of a structural subunit, most often Mfa1, and the accessory subunits Mfa3, Mfa4 and Mfa5. Mfa4 is required for Mfa3 and Mfa5 insertion into the fimbrium. Fimbrium assembly occurs by linear, head-to-tail oligomerization of fimbrial subunits. This is mediated via insertion of a C-terminal beta-strand from one subunit into a groove in the N-terminal domain of the following subunit.

It is found in the fimbrium. It localises to the cell outer membrane. Its function is as follows. Tip subunit of the minor fimbriae. These filamentous pili are attached to the cell surface; they mediate biofilm formation, adhesion onto host cells and onto other bacteria that are part of the oral microbiome. They play an important role in invasion of periodontal tissues and are recognized as major virulence factors. This Porphyromonas gingivalis (strain ATCC 33277 / DSM 20709 / CIP 103683 / JCM 12257 / NCTC 11834 / 2561) protein is Minor fimbrium tip subunit MfA4.